A 190-amino-acid chain; its full sequence is Potassium-transporting ATPase KdpC subunit (190 aa).

Residues 10–30 (TFIFLLLITGGVYPLLTTALG) traverse the membrane as a helical segment.

This sequence belongs to the KdpC family. In terms of assembly, the system is composed of three essential subunits: KdpA, KdpB and KdpC.

The protein localises to the cell inner membrane. In terms of biological role, part of the high-affinity ATP-driven potassium transport (or Kdp) system, which catalyzes the hydrolysis of ATP coupled with the electrogenic transport of potassium into the cytoplasm. This subunit acts as a catalytic chaperone that increases the ATP-binding affinity of the ATP-hydrolyzing subunit KdpB by the formation of a transient KdpB/KdpC/ATP ternary complex. The polypeptide is Potassium-transporting ATPase KdpC subunit (Escherichia coli O9:H4 (strain HS)).